A 480-amino-acid chain; its full sequence is Pyruvate kinase (480 aa).

Arg36 contributes to the substrate binding site. Positions 38, 40, and 70 each coordinate K(+). Residue 38–41 coordinates ATP; sequence NFSH. The ATP site is built by Arg77 and Lys160. Glu225 serves as a coordination point for Mg(2+). The substrate site is built by Gly251, Asp252, and Thr284. Mg(2+) is bound at residue Asp252.

Belongs to the pyruvate kinase family. As to quaternary structure, homotetramer. Mg(2+) serves as cofactor. Requires K(+) as cofactor.

It carries out the reaction pyruvate + ATP = phosphoenolpyruvate + ADP + H(+). The protein operates within carbohydrate degradation; glycolysis; pyruvate from D-glyceraldehyde 3-phosphate: step 5/5. With respect to regulation, allosterically activated by AMP and by several sugar phosphates. Belongs to type II PK. The chain is Pyruvate kinase (pykA) from Buchnera aphidicola subsp. Acyrthosiphon pisum (strain APS) (Acyrthosiphon pisum symbiotic bacterium).